A 203-amino-acid chain; its full sequence is Kunitz trypsin inhibitor 6 (203 aa).

An N-terminal signal peptide occupies residues 1 to 21 (MKTFQLMMISFLFVAITTTSG). A disulfide bond links C70 and C115. 5 N-linked (GlcNAc...) asparagine glycosylation sites follow: N94, N127, N136, N144, and N197.

This sequence belongs to the protease inhibitor I3 (leguminous Kunitz-type inhibitor) family.

Exhibits Kunitz trypsin protease inhibitor activity. The protein is Kunitz trypsin inhibitor 6 of Arabidopsis thaliana (Mouse-ear cress).